Here is a 266-residue protein sequence, read N- to C-terminus: Tryptophan synthase alpha chain (266 aa).

Catalysis depends on proton acceptor residues Glu-49 and Asp-60.

It belongs to the TrpA family. As to quaternary structure, tetramer of two alpha and two beta chains.

It catalyses the reaction (1S,2R)-1-C-(indol-3-yl)glycerol 3-phosphate + L-serine = D-glyceraldehyde 3-phosphate + L-tryptophan + H2O. Its pathway is amino-acid biosynthesis; L-tryptophan biosynthesis; L-tryptophan from chorismate: step 5/5. Its function is as follows. The alpha subunit is responsible for the aldol cleavage of indoleglycerol phosphate to indole and glyceraldehyde 3-phosphate. This is Tryptophan synthase alpha chain from Chloroflexus aurantiacus (strain ATCC 29364 / DSM 637 / Y-400-fl).